A 213-amino-acid chain; its full sequence is MVSLHPLLDNGITPGSDSFPGGTLKCLCPSFPVEITLTTNVAHNHACGCSKCWKPAGALFSIVGVVPRDELSVTANGDKLAIVDESAVIQRYACKECGTHLYRRIEKEHPFYGLDFVHAELSEEEGWQEPQFAAFVSSVIEQGFDPAKIGEVRARFRELGLETYDSLSPPLMDAIAAWTGRKNGKYDLHSWLDCERRKGGGGGGQPGGVVCRL.

Residues 19-165 form the CENP-V/GFA domain; it reads FPGGTLKCLC…FRELGLETYD (147 aa). Zn(2+)-binding residues include Cys-26, Cys-28, Cys-47, Cys-49, Cys-52, Cys-94, and Cys-97.

This sequence belongs to the Gfa family. Zn(2+) serves as cofactor.

The catalysed reaction is S-(hydroxymethyl)glutathione = glutathione + formaldehyde. The protein operates within one-carbon metabolism; formaldehyde degradation; formate from formaldehyde (glutathione route): step 1/3. Its function is as follows. Catalyzes the condensation of formaldehyde and glutathione to S-hydroxymethylglutathione. This chain is Putative glutathione-dependent formaldehyde-activating enzyme, found in Podospora anserina (strain S / ATCC MYA-4624 / DSM 980 / FGSC 10383) (Pleurage anserina).